Consider the following 222-residue polypeptide: Probable nicotinate-nucleotide adenylyltransferase (222 aa).

This sequence belongs to the NadD family.

The enzyme catalyses nicotinate beta-D-ribonucleotide + ATP + H(+) = deamido-NAD(+) + diphosphate. It functions in the pathway cofactor biosynthesis; NAD(+) biosynthesis; deamido-NAD(+) from nicotinate D-ribonucleotide: step 1/1. Functionally, catalyzes the reversible adenylation of nicotinate mononucleotide (NaMN) to nicotinic acid adenine dinucleotide (NaAD). This is Probable nicotinate-nucleotide adenylyltransferase from Xylella fastidiosa (strain M12).